We begin with the raw amino-acid sequence, 336 residues long: Holliday junction branch migration complex subunit RuvB (336 aa).

Residues 4-184 are large ATPase domain (RuvB-L); that stretch reads SDRLISSQSI…FGIVQRLEYY (181 aa). Residues I23, R24, G65, K68, T69, T70, 131 to 133, R174, Y184, and R221 contribute to the ATP site; that span reads EDY. Residue T69 participates in Mg(2+) binding. A small ATPAse domain (RuvB-S) region spans residues 185–255; sequence SVDSLTQIVA…MAQQALEMLE (71 aa). The interval 258-336 is head domain (RuvB-H); it reads QHGFDLMDRK…HFGFSAIEQE (79 aa). DNA is bound by residues R313 and R318.

It belongs to the RuvB family. In terms of assembly, homohexamer. Forms an RuvA(8)-RuvB(12)-Holliday junction (HJ) complex. HJ DNA is sandwiched between 2 RuvA tetramers; dsDNA enters through RuvA and exits via RuvB. An RuvB hexamer assembles on each DNA strand where it exits the tetramer. Each RuvB hexamer is contacted by two RuvA subunits (via domain III) on 2 adjacent RuvB subunits; this complex drives branch migration. In the full resolvosome a probable DNA-RuvA(4)-RuvB(12)-RuvC(2) complex forms which resolves the HJ.

It localises to the cytoplasm. The catalysed reaction is ATP + H2O = ADP + phosphate + H(+). The RuvA-RuvB-RuvC complex processes Holliday junction (HJ) DNA during genetic recombination and DNA repair, while the RuvA-RuvB complex plays an important role in the rescue of blocked DNA replication forks via replication fork reversal (RFR). RuvA specifically binds to HJ cruciform DNA, conferring on it an open structure. The RuvB hexamer acts as an ATP-dependent pump, pulling dsDNA into and through the RuvAB complex. RuvB forms 2 homohexamers on either side of HJ DNA bound by 1 or 2 RuvA tetramers; 4 subunits per hexamer contact DNA at a time. Coordinated motions by a converter formed by DNA-disengaged RuvB subunits stimulates ATP hydrolysis and nucleotide exchange. Immobilization of the converter enables RuvB to convert the ATP-contained energy into a lever motion, pulling 2 nucleotides of DNA out of the RuvA tetramer per ATP hydrolyzed, thus driving DNA branch migration. The RuvB motors rotate together with the DNA substrate, which together with the progressing nucleotide cycle form the mechanistic basis for DNA recombination by continuous HJ branch migration. Branch migration allows RuvC to scan DNA until it finds its consensus sequence, where it cleaves and resolves cruciform DNA. The protein is Holliday junction branch migration complex subunit RuvB of Legionella pneumophila subsp. pneumophila (strain Philadelphia 1 / ATCC 33152 / DSM 7513).